The chain runs to 354 residues: Holliday junction branch migration complex subunit RuvB (354 aa).

Residues 1 to 22 (MTIQTDDFAPAPPRVVSAAPAS) are disordered. A large ATPase domain (RuvB-L) region spans residues 5-193 (TDDFAPAPPR…FGIVARLEFY (189 aa)). ATP is bound by residues L32, R33, G74, K77, T78, T79, 140–142 (EDY), R183, Y193, and R230. A Mg(2+)-binding site is contributed by T78. Residues 194 to 264 (TPEELALIVR…IAHKALVMLD (71 aa)) form a small ATPAse domain (RuvB-S) region. The tract at residues 267 to 354 (PQGFDLMDRK…RSDGQDLFGI (88 aa)) is head domain (RuvB-H). Residues R303, R322, and R327 each contribute to the DNA site.

Belongs to the RuvB family. Homohexamer. Forms an RuvA(8)-RuvB(12)-Holliday junction (HJ) complex. HJ DNA is sandwiched between 2 RuvA tetramers; dsDNA enters through RuvA and exits via RuvB. An RuvB hexamer assembles on each DNA strand where it exits the tetramer. Each RuvB hexamer is contacted by two RuvA subunits (via domain III) on 2 adjacent RuvB subunits; this complex drives branch migration. In the full resolvosome a probable DNA-RuvA(4)-RuvB(12)-RuvC(2) complex forms which resolves the HJ.

The protein localises to the cytoplasm. It carries out the reaction ATP + H2O = ADP + phosphate + H(+). Its function is as follows. The RuvA-RuvB-RuvC complex processes Holliday junction (HJ) DNA during genetic recombination and DNA repair, while the RuvA-RuvB complex plays an important role in the rescue of blocked DNA replication forks via replication fork reversal (RFR). RuvA specifically binds to HJ cruciform DNA, conferring on it an open structure. The RuvB hexamer acts as an ATP-dependent pump, pulling dsDNA into and through the RuvAB complex. RuvB forms 2 homohexamers on either side of HJ DNA bound by 1 or 2 RuvA tetramers; 4 subunits per hexamer contact DNA at a time. Coordinated motions by a converter formed by DNA-disengaged RuvB subunits stimulates ATP hydrolysis and nucleotide exchange. Immobilization of the converter enables RuvB to convert the ATP-contained energy into a lever motion, pulling 2 nucleotides of DNA out of the RuvA tetramer per ATP hydrolyzed, thus driving DNA branch migration. The RuvB motors rotate together with the DNA substrate, which together with the progressing nucleotide cycle form the mechanistic basis for DNA recombination by continuous HJ branch migration. Branch migration allows RuvC to scan DNA until it finds its consensus sequence, where it cleaves and resolves cruciform DNA. The polypeptide is Holliday junction branch migration complex subunit RuvB (Variovorax paradoxus (strain S110)).